The sequence spans 492 residues: Zinc finger protein 385B (492 aa).

2 consecutive Matrin-type zinc fingers follow at residues 8–44 and 143–173; these read KKLLYSLCDVCNIQLHSAAQAQVHYNGKSHLKRVKQL and ISCNICQLRFNSDSQAEAHYKGSKHAKKLKA. A disordered region spans residues 159 to 206; sequence EAHYKGSKHAKKLKAQESPKNKQKSAVAQDSGTKTITSTSTNTTTTTT. Residues 189–206 show a composition bias toward low complexity; that stretch reads SGTKTITSTSTNTTTTTT. 2 consecutive Matrin-type zinc fingers follow at residues 303–337 and 371–401; these read KKLLYCSLCKVAVNSLSQLEAHNTGSKHKTMLEAR and FHCEICDVHVNSEIQLKQHISSRRHKDRVAG. The tract at residues 388 to 420 is disordered; sequence QHISSRRHKDRVAGKPTKPKYSPYNKQQRSSSS.

Its subcellular location is the nucleus. May play a role in p53/TP53-mediated apoptosis. In Danio rerio (Zebrafish), this protein is Zinc finger protein 385B (znf385b).